We begin with the raw amino-acid sequence, 547 residues long: Probable terpene synthase 3 (547 aa).

Positions 298, 302, and 451 each coordinate Mg(2+). Positions Asp298–Asp302 match the DDXXD motif motif.

Belongs to the terpene synthase family. The cofactor is Mg(2+).

Its function is as follows. Probable sesquiterpene synthase. This Ricinus communis (Castor bean) protein is Probable terpene synthase 3 (TPS3).